The following is a 244-amino-acid chain: 5-oxoprolinase subunit A (244 aa).

Belongs to the LamB/PxpA family. As to quaternary structure, forms a complex composed of PxpA, PxpB and PxpC.

It carries out the reaction 5-oxo-L-proline + ATP + 2 H2O = L-glutamate + ADP + phosphate + H(+). In terms of biological role, catalyzes the cleavage of 5-oxoproline to form L-glutamate coupled to the hydrolysis of ATP to ADP and inorganic phosphate. This Shigella boydii serotype 18 (strain CDC 3083-94 / BS512) protein is 5-oxoprolinase subunit A.